The sequence spans 225 residues: MRIDIITILPELLRSPFEASIMKRAIDKGLVEVYFHNLRDYTTNKQKSVDDYPFGGGAGMVMNVQPIDDCITHLKSERTYDEVIYMTPDGETLNQKMTNSMSLLGNIIILCGHYKGVDQRVRDHFITREISIGDYVLSGGELGALVLCDALIRLIPGVLSDETSALTDSFQDNLLSGPIYTRPADYKGWKVPEVLTSGHFAKIDKWREDMAYEHTKNRRPDLLDN.

S-adenosyl-L-methionine is bound by residues Gly-112 and 132–137 (IGDYVL).

It belongs to the RNA methyltransferase TrmD family. Homodimer.

Its subcellular location is the cytoplasm. The catalysed reaction is guanosine(37) in tRNA + S-adenosyl-L-methionine = N(1)-methylguanosine(37) in tRNA + S-adenosyl-L-homocysteine + H(+). Its function is as follows. Specifically methylates guanosine-37 in various tRNAs. The polypeptide is tRNA (guanine-N(1)-)-methyltransferase (Flavobacterium psychrophilum (strain ATCC 49511 / DSM 21280 / CIP 103535 / JIP02/86)).